The primary structure comprises 503 residues: Probable cytosol aminopeptidase (503 aa).

Lysine 270 and aspartate 275 together coordinate Mn(2+). Residue lysine 282 is part of the active site. Aspartate 293, aspartate 352, and glutamate 354 together coordinate Mn(2+). Residue arginine 356 is part of the active site.

This sequence belongs to the peptidase M17 family. Requires Mn(2+) as cofactor.

It localises to the cytoplasm. It catalyses the reaction Release of an N-terminal amino acid, Xaa-|-Yaa-, in which Xaa is preferably Leu, but may be other amino acids including Pro although not Arg or Lys, and Yaa may be Pro. Amino acid amides and methyl esters are also readily hydrolyzed, but rates on arylamides are exceedingly low.. The catalysed reaction is Release of an N-terminal amino acid, preferentially leucine, but not glutamic or aspartic acids.. Its function is as follows. Presumably involved in the processing and regular turnover of intracellular proteins. Catalyzes the removal of unsubstituted N-terminal amino acids from various peptides. This Edwardsiella ictaluri (strain 93-146) protein is Probable cytosol aminopeptidase.